A 354-amino-acid polypeptide reads, in one-letter code: Histidinol-phosphate aminotransferase 1 (354 aa).

K209 is modified (N6-(pyridoxal phosphate)lysine).

This sequence belongs to the class-II pyridoxal-phosphate-dependent aminotransferase family. Histidinol-phosphate aminotransferase subfamily. In terms of assembly, homodimer. Pyridoxal 5'-phosphate serves as cofactor.

The enzyme catalyses L-histidinol phosphate + 2-oxoglutarate = 3-(imidazol-4-yl)-2-oxopropyl phosphate + L-glutamate. The protein operates within amino-acid biosynthesis; L-histidine biosynthesis; L-histidine from 5-phospho-alpha-D-ribose 1-diphosphate: step 7/9. In Oceanobacillus iheyensis (strain DSM 14371 / CIP 107618 / JCM 11309 / KCTC 3954 / HTE831), this protein is Histidinol-phosphate aminotransferase 1 (hisC1).